We begin with the raw amino-acid sequence, 192 residues long: Imidazoleglycerol-phosphate dehydratase (192 aa).

This sequence belongs to the imidazoleglycerol-phosphate dehydratase family.

The protein resides in the cytoplasm. The catalysed reaction is D-erythro-1-(imidazol-4-yl)glycerol 3-phosphate = 3-(imidazol-4-yl)-2-oxopropyl phosphate + H2O. Its pathway is amino-acid biosynthesis; L-histidine biosynthesis; L-histidine from 5-phospho-alpha-D-ribose 1-diphosphate: step 6/9. The polypeptide is Imidazoleglycerol-phosphate dehydratase (Methanocella arvoryzae (strain DSM 22066 / NBRC 105507 / MRE50)).